The sequence spans 268 residues: Agamous-like MADS-box protein AGL15 (268 aa).

An MADS-box domain is found at 1–61; it reads MGRGKIEIKR…GKLFEYSSTG (61 aa). The K-box domain maps to 80–170; the sequence is AEEDCAEVDI…RRQVQELRSF (91 aa). The interval 205-268 is disordered; it reads TDSDTTLQLG…PEAKRQRFSV (64 aa). Over residues 218–232 the composition is skewed to basic and acidic residues; that stretch reads EAHDRRTNEGERESP. Positions 233 to 244 are enriched in polar residues; sequence SSDSVTTNTSSE.

As to quaternary structure, homodimer. Interacts with SVP, AGL24, AP1, AGL6, AG, AGL1, AGL11, AGL5, AGL16, SOC1 and AGL21. Expressed at low levels in flowers and siliques. Also present in seedlings. Detected during embryogenesis and accumulates during early seed development (at protein level). Expressed in shoot apices and the base of leaf petioles.

The protein localises to the nucleus. It is found in the cytoplasm. Functionally, transcription factor involved in the negative regulation of flowering, probably through the photoperiodic pathway. Acts both as an activator and as a repressor of transcription. Binds DNA in a sequence-specific manner in large CArG motif 5'-CC (A/T)8 GG-3'. Participates probably in the regulation of programs active during the early stages of embryo development. Prevents premature perianth senescence and abscission, fruits development and seed desiccation. Stimulates the expression of at least DTA4, LEC2, FUS3, ABI3, AT4G38680/CSP2 and GRP2B/CSP4. Can enhance somatic embryo development in vitro. The sequence is that of Agamous-like MADS-box protein AGL15 (AGL15) from Arabidopsis thaliana (Mouse-ear cress).